The following is a 317-amino-acid chain: MAQEYLDFELPIAELEAKIESLRSVASQDDEINLDDEIARLQKKSAELTKKTFANLDAWQVSKMARHPNRPYTLDYIERIFTEFEELAGDRAFADDKAIVGGLARLDGKPVMVIGHQKGRSVKDKVKRNFGMPAPEGYRKALRLMQMAERFNLPIITFIDTPGAYPGVGAEERGQSEAIARNLREMSTLKVPVICTVIGEGGSGGALAIGVGDKVNMLQYSTYSVISPEGCASILWKSAEKASTAAEVMGLTANRLKELNLIDSIIEEPLGGAHRDFDAMAHNLKQRLLDDLKELEMLDEDNLLHRRYNRLMDYGYC.

The 262-residue stretch at 33–294 (NLDDEIARLQ…KQRLLDDLKE (262 aa)) folds into the CoA carboxyltransferase C-terminal domain.

The protein belongs to the AccA family. Acetyl-CoA carboxylase is a heterohexamer composed of biotin carboxyl carrier protein (AccB), biotin carboxylase (AccC) and two subunits each of ACCase subunit alpha (AccA) and ACCase subunit beta (AccD).

The protein resides in the cytoplasm. The catalysed reaction is N(6)-carboxybiotinyl-L-lysyl-[protein] + acetyl-CoA = N(6)-biotinyl-L-lysyl-[protein] + malonyl-CoA. It functions in the pathway lipid metabolism; malonyl-CoA biosynthesis; malonyl-CoA from acetyl-CoA: step 1/1. Component of the acetyl coenzyme A carboxylase (ACC) complex. First, biotin carboxylase catalyzes the carboxylation of biotin on its carrier protein (BCCP) and then the CO(2) group is transferred by the carboxyltransferase to acetyl-CoA to form malonyl-CoA. This Pasteurella multocida (strain Pm70) protein is Acetyl-coenzyme A carboxylase carboxyl transferase subunit alpha.